A 258-amino-acid polypeptide reads, in one-letter code: Small ribosomal subunit protein uS2 (258 aa).

The protein belongs to the universal ribosomal protein uS2 family.

The chain is Small ribosomal subunit protein uS2 from Leuconostoc citreum (strain KM20).